Here is a 1260-residue protein sequence, read N- to C-terminus: MKQDVRIAIDRGGTFTDVYYKISGWREQEGIFKLLSVNPKLYDDAPTEGIRRVLCYASGEEIPRKVPLDLTRVSSIRMGTTVATNALLERKGEKTAFIITEGFRNLVEIGNQARPDLFDLTVSRPSPLYQRVIEAKERVVLENQFSKTAGIVQGITGEFLRVEKKLDEEALYQDLKELYNEGFRSISVSLMHSYTYPLHEEVVEKIAKRIGFTDISLSSKLTPMVKIVPRAVSAIIDAYLSSTLRYYLDSFKKNFYNVKPNTIQFMKSDGGLVDIDNFTAISAIMSGPAAGTVGFAKTSSLHADDKTPAIGFDMGGTSTDVSRYDGKFEHIYEANIFGLYIQSPQLDIQTVAAGGGSRLFWRNQLFSVGPESAGAFPGPACYLNGGPLTVTDANVLLGRIIPDFFPKIFGPKENESMNKDIVIEKFSELRDIINIDIEKEKTIEEIAMGFIQVANETMCRPIRKLTESRGLDLSAHHLAVFGGAGGQHACAIASLLNIEKIIIHKYSSVLSAYGLALAHVTHEEQMPCLSVLDEDNLPLIQSKFDVLDKKAVSFLENEGYLESQISTELFANLRYEGNDTTMMIAKPKDSWDFKTLFEESYKNQFGFSLIDRKIMVEDIRIRAIARASNQSEVDTVFASETENENTVFIRDNKPTMYTPVYFAEVGKVNCHVYQLSSLPVHSLITGPAVIVDTTQTLLIEPSFTAKIFARHVLLEKTKSTLVVKKNVDLDPITMTIFANRFMSISEQMGQVLQKTAVSVNVKERLDYSCALFSPDGGLVANAPHVPAMLGSMQTAVKWQHNYWKGKLVPGDVLLSNHPIAGGVHLPDLTVVTPVFDNNKDIIFYCAARGHMVDVGGITPGSMPSNSKAIYEEGAAIKTFKVVKAGTFDEKGLTQLLFDEPAKYPDCSGSRTLRDNISDVKAMLSACHRGRSMVEKLVVEYGLDIVQRSMYGIQAAAEKAVRDVLKAFSVQNSQKPLKAIDYMDDGTPLQLEVKIDPETGDAVFDFEGTGPEVYGNWNAPIAITYSSVIYCLRSIINQDIPLNEGCLKPIEIRIPPSCFLNPSETAAVVGGNVLTSQRITDVILKAFSICAASQGCMNNLTFGYDGENGEEGFAMYETIAGGAGAGPTWNGTSGVHTHMTNTRITDPEVVERRAPVILRRFCLRENSGGKGEYHGGDGVIRHFEFRRSMHCSILSERRSRAPYGMNGGEDGAMGVNTWIDCSNPDFPRYVNLGGKNHVLMGKGDHIVIETPGGGGYGAVSI.

This sequence belongs to the oxoprolinase family.

This is an uncharacterized protein from Schizosaccharomyces pombe (strain 972 / ATCC 24843) (Fission yeast).